An 876-amino-acid polypeptide reads, in one-letter code: Alanine--tRNA ligase (876 aa).

His562, His566, Cys666, and His670 together coordinate Zn(2+).

It belongs to the class-II aminoacyl-tRNA synthetase family. Zn(2+) is required as a cofactor.

The protein resides in the cytoplasm. It catalyses the reaction tRNA(Ala) + L-alanine + ATP = L-alanyl-tRNA(Ala) + AMP + diphosphate. Catalyzes the attachment of alanine to tRNA(Ala) in a two-step reaction: alanine is first activated by ATP to form Ala-AMP and then transferred to the acceptor end of tRNA(Ala). Also edits incorrectly charged Ser-tRNA(Ala) and Gly-tRNA(Ala) via its editing domain. The sequence is that of Alanine--tRNA ligase from Hahella chejuensis (strain KCTC 2396).